The following is a 474-amino-acid chain: PRAME family member 1 (474 aa).

The stretch at 97-124 is one LRR 1; degenerate repeat; that stretch reads RWKLQVLDLRDVDENFWARWPGAWALSC. Residues 179-203 form an LRR 2; degenerate repeat; the sequence is HLCCSKLVNYLTPIKYLRKSLKIIY. Residues 204 to 230 form an LRR 3; degenerate repeat; it reads LNSIQELEIRNMSWPRLIRKLRCYLKE. The stretch at 231–265 is one LRR 4; degenerate repeat; sequence MKNLRKLVFSRCHHYTSDNELEGRLVAKFSSVFLR. LRR repeat units lie at residues 266 to 291, 292 to 323, 324 to 342, 348 to 375, and 376 to 400; these read LEHL…IRCL, QNPL…GYLK, HLNL…PLGA, AASL…GLSR, and CSQL…LLRH.

The protein belongs to the PRAME family.

In Homo sapiens (Human), this protein is PRAME family member 1.